The primary structure comprises 278 residues: 4-deoxy-L-threo-5-hexosulose-uronate ketol-isomerase (278 aa).

Zn(2+) contacts are provided by His196, His198, Glu203, and His245.

This sequence belongs to the KduI family. It depends on Zn(2+) as a cofactor.

The enzyme catalyses 5-dehydro-4-deoxy-D-glucuronate = 3-deoxy-D-glycero-2,5-hexodiulosonate. The protein operates within glycan metabolism; pectin degradation; 2-dehydro-3-deoxy-D-gluconate from pectin: step 4/5. Its function is as follows. Catalyzes the isomerization of 5-dehydro-4-deoxy-D-glucuronate to 3-deoxy-D-glycero-2,5-hexodiulosonate. In Salmonella agona (strain SL483), this protein is 4-deoxy-L-threo-5-hexosulose-uronate ketol-isomerase.